Here is an 89-residue protein sequence, read N- to C-terminus: Small ribosomal subunit protein uS19 (89 aa).

This sequence belongs to the universal ribosomal protein uS19 family.

In terms of biological role, protein S19 forms a complex with S13 that binds strongly to the 16S ribosomal RNA. The chain is Small ribosomal subunit protein uS19 from Brachyspira hyodysenteriae (strain ATCC 49526 / WA1).